The chain runs to 474 residues: MDKPRVRFAPSPTGYLHIGGARTALFNWLWARRNGGTFVLRIEDTDRERSTQLAVDAILDGLRWLGLDWDEGPGVGGPHPPYFQTERLDLYKAHAERLIREGKAYACYCTREELDAQRKQAEAEKRQFRYPGTCRDEPYDPSRPHVVRFRVPDAGATSWNDLVKGVISTPHDTLQDEVILRGDGVPLYNFGAVVDDITMEINLVGRGDDHVNNTARQILMYEALGYPVPTFAHFPMILGADKARLSKRHGATSVTAYRDLGFLPQAVVNYLVRLGWSHGDQELFTLDELVRYFDLKDVGATAGVFNLEKMAWVNHEWLKRLSPEELAKLALPHFRAAGLPAEDDEKLRHVCAVARERAKTLGEYVQQFRYFYAPIALDPKAKAKFLTADTRPVLQAVRDAIAALPALETQAVEQVFHGEAERRGVGLGKVAQPARVALTGGTASPGMYDVVQILGKDETLRRLDEAIRVAGQPG.

Positions 10-20 match the 'HIGH' region motif; the sequence is PSPTGYLHIGG. Cys107, Cys109, Cys134, and Asp136 together coordinate Zn(2+). The short motif at 244–248 is the 'KMSKS' region element; that stretch reads RLSKR. Lys247 is an ATP binding site.

Belongs to the class-I aminoacyl-tRNA synthetase family. Glutamate--tRNA ligase type 1 subfamily. Monomer. The cofactor is Zn(2+).

The protein localises to the cytoplasm. The enzyme catalyses tRNA(Glu) + L-glutamate + ATP = L-glutamyl-tRNA(Glu) + AMP + diphosphate. Catalyzes the attachment of glutamate to tRNA(Glu) in a two-step reaction: glutamate is first activated by ATP to form Glu-AMP and then transferred to the acceptor end of tRNA(Glu). The protein is Glutamate--tRNA ligase of Anaeromyxobacter dehalogenans (strain 2CP-C).